The sequence spans 321 residues: Fe-S cluster assembly protein DRE2 (321 aa).

An N-terminal SAM-like domain region spans residues 1 to 161 (MPAPVPPTAF…STPVTLSGAR (161 aa)). Positions 123–168 (PSPSTLAYTSPSAPSLPTVASDPSPAPSSSTPVTLSGARPLQLRRN) are disordered. Residues 139–156 (PTVASDPSPAPSSSTPVT) are compositionally biased toward low complexity. The segment at 162–197 (PLQLRRNGDKARKAALWAIDSPLIPDGGKSLLTPAD) is linker. Residues Cys203, Cys219, Cys222, and Cys224 each contribute to the [2Fe-2S] cluster site. Residues 203-224 (CVFPAENGKPVKRRRACKDCTC) form a fe-S binding site A region. Residues Cys285, Cys288, Cys296, and Cys299 each coordinate [4Fe-4S] cluster. Short sequence motifs (cx2C motif) lie at residues 285 to 288 (CGSC) and 296 to 299 (CSSC). A fe-S binding site B region spans residues 285–299 (CGSCYLGDAFRCSSC).

The protein belongs to the anamorsin family. In terms of assembly, monomer. Interacts with TAH18. Interacts with MIA40. It depends on [2Fe-2S] cluster as a cofactor. The cofactor is [4Fe-4S] cluster.

Its subcellular location is the cytoplasm. It localises to the mitochondrion intermembrane space. Functionally, component of the cytosolic iron-sulfur (Fe-S) protein assembly (CIA) machinery required for the maturation of extramitochondrial Fe-S proteins. Part of an electron transfer chain functioning in an early step of cytosolic Fe-S biogenesis, facilitating the de novo assembly of a [4Fe-4S] cluster on the scaffold complex CFD1-NBP35. Electrons are transferred to DRE2 from NADPH via the FAD- and FMN-containing protein TAH18. TAH18-DRE2 are also required for the assembly of the diferric tyrosyl radical cofactor of ribonucleotide reductase (RNR), probably by providing electrons for reduction during radical cofactor maturation in the catalytic small subunit RNR2. In Cryptococcus neoformans var. neoformans serotype D (strain B-3501A) (Filobasidiella neoformans), this protein is Fe-S cluster assembly protein DRE2.